A 624-amino-acid polypeptide reads, in one-letter code: Diatom spindle kinesin-1 (624 aa).

The segment at 1-59 is disordered; sequence MNAANRRKSTSTVGITGRKDATRMKIEQMEKERKERRKTMMQRKEARKQEHMKNIEAGN. The segment at 1 to 85 is globular; that stretch reads MNAANRRKST…QENKIGDKSP (85 aa). Composition is skewed to basic and acidic residues over residues 17-33 and 42-54; these read GRKD…EKER and QRKE…HMKN. The Kinesin motor domain occupies 95-411; it reads NICIAVRKRP…LRYADRIKEQ (317 aa). ATP is bound at residue 186–193; sequence GQTGSGKT. Residues 426–624 adopt a coiled-coil conformation; the sequence is SNREIMPSKE…LARQVQLTQY (199 aa). Over residues 478–511 the composition is skewed to acidic residues; sequence VDEEEADDEEGDYEEESEDLDYEDSEGQDYEEAV. The segment at 478 to 528 is disordered; it reads VDEEEADDEEGDYEEESEDLDYEDSEGQDYEEAVESQYDHSQEAQEGEEEL.

It belongs to the TRAFAC class myosin-kinesin ATPase superfamily. Kinesin family. MCAK/KIF2 subfamily.

The protein resides in the cytoplasm. It localises to the cytoskeleton. Its function is as follows. Involved in anaphase spindle elongation. In Cylindrotheca fusiformis (Marine diatom), this protein is Diatom spindle kinesin-1 (DSK1).